An 851-amino-acid chain; its full sequence is DNA mismatch repair protein MutS (851 aa).

602-609 (GPNMSGKS) provides a ligand contact to ATP.

Belongs to the DNA mismatch repair MutS family.

Functionally, this protein is involved in the repair of mismatches in DNA. It is possible that it carries out the mismatch recognition step. This protein has a weak ATPase activity. This chain is DNA mismatch repair protein MutS, found in Streptococcus pyogenes serotype M18 (strain MGAS8232).